The primary structure comprises 402 residues: Phosphomevalonate dehydratase large subunit (402 aa).

5 residues coordinate (R)-5-phosphomevalonate: Gly48, Ala49, Ser50, Asn79, and Pro80. Cys122 is a binding site for [4Fe-4S] cluster. (R)-5-phosphomevalonate-binding residues include Glu145 and Ser146. [4Fe-4S] cluster is bound by residues Cys297 and Cys356. Residue Lys377 participates in (R)-5-phosphomevalonate binding.

This sequence belongs to the AcnX type II large subunit family. Heterodimer composed of a large subunit (PMDh-L) and a small subunit (PMDh-S). [4Fe-4S] cluster serves as cofactor.

It carries out the reaction (R)-5-phosphomevalonate = (2E)-3-methyl-5-phosphooxypent-2-enoate + H2O. The protein operates within isoprenoid biosynthesis; isopentenyl diphosphate biosynthesis via mevalonate pathway. Its activity is regulated as follows. Neither the addition of 1 mM Mg(2+) nor 1 mM Mn(2+) has a significant effect on the activity, whereas Zn(2+) causes almost complete inactivation. Strongly inhibited by H(2)O(2), but not by EDTA or iodoacetamide. Its function is as follows. Component of a hydro-lyase that catalyzes the dehydration of mevalonate 5-phosphate (MVA5P) to form trans-anhydromevalonate 5-phosphate (tAHMP). Involved in the archaeal mevalonate (MVA) pathway, which provides fundamental precursors for isoprenoid biosynthesis, such as isopentenyl diphosphate (IPP) and dimethylallyl diphosphate (DMAPP). This is Phosphomevalonate dehydratase large subunit from Aeropyrum pernix (strain ATCC 700893 / DSM 11879 / JCM 9820 / NBRC 100138 / K1).